We begin with the raw amino-acid sequence, 181 residues long: Adenylate kinase (181 aa).

An ATP-binding site is contributed by 10 to 15 (GAGKGT). Positions 30–59 (STGDLFRANISQGTELGKQAQEYMDAGKLV) are NMP. AMP is bound by residues Thr-31, Arg-36, 57 to 59 (KLV), 85 to 88 (GFPR), and Gln-92. The LID stretch occupies residues 126 to 132 (SRGRNDD). Arg-127 lines the ATP pocket. 2 residues coordinate AMP: Arg-129 and Arg-140. Gly-166 provides a ligand contact to ATP.

This sequence belongs to the adenylate kinase family. As to quaternary structure, monomer.

The protein localises to the cytoplasm. It catalyses the reaction AMP + ATP = 2 ADP. It participates in purine metabolism; AMP biosynthesis via salvage pathway; AMP from ADP: step 1/1. Functionally, catalyzes the reversible transfer of the terminal phosphate group between ATP and AMP. Plays an important role in cellular energy homeostasis and in adenine nucleotide metabolism. This chain is Adenylate kinase, found in Corynebacterium urealyticum (strain ATCC 43042 / DSM 7109).